The primary structure comprises 391 residues: tRNA(Met) cytidine acetate ligase (391 aa).

Residues 7–20 (IAEY…HIYQ), Gly-101, Asn-153, and Arg-178 contribute to the ATP site.

This sequence belongs to the TmcAL family.

Its subcellular location is the cytoplasm. It catalyses the reaction cytidine(34) in elongator tRNA(Met) + acetate + ATP = N(4)-acetylcytidine(34) in elongator tRNA(Met) + AMP + diphosphate. Functionally, catalyzes the formation of N(4)-acetylcytidine (ac(4)C) at the wobble position of elongator tRNA(Met), using acetate and ATP as substrates. First activates an acetate ion to form acetyladenylate (Ac-AMP) and then transfers the acetyl group to tRNA to form ac(4)C34. In Latilactobacillus sakei subsp. sakei (strain 23K) (Lactobacillus sakei subsp. sakei), this protein is tRNA(Met) cytidine acetate ligase.